The following is a 2546-amino-acid chain: Formin-J (2546 aa).

Disordered stretches follow at residues 1 to 40 (MEEN…SFVK), 61 to 108 (ENSN…PLSE), 188 to 270 (KNIT…PNSA), 369 to 414 (TTNN…SSSS), 502 to 541 (TNSF…TPNS), 802 to 849 (SSIS…NTRK), 879 to 898 (TSVP…NNNN), 987 to 1101 (TTNN…GGIG), 1485 to 1529 (PKSK…ASLS), 1558 to 1601 (KRSK…FKSP), 1659 to 1775 (INNI…KVNS), 1840 to 1869 (VPTT…ETQS), and 2014 to 2033 (SNLS…SSLE). Composition is skewed to low complexity over residues 16–37 (NNNE…SSSS) and 62–98 (NSNN…NSTS). Composition is skewed to polar residues over residues 99–108 (GSKDNTPLSE) and 188–198 (KNITPSKNNSP). Low complexity-rich tracts occupy residues 203–237 (NNNN…NNNN) and 247–270 (NKNS…PNSA). The segment covering 377 to 389 (AESLTTYSESSEI) has biased composition (polar residues). Composition is skewed to low complexity over residues 390-414 (STDS…SSSS) and 502-513 (TNSFGSSTTTTI). An FHA domain is found at 391–444 (TDSTGVCSSSSSTSSTLSSKSSSSSSFNKFMEFLLIYIEDNDSTNGTWVNGNKL). Residues 457 to 963 (KITLSTPDFS…SSISNEQEYQ (507 aa)) enclose the GBD/FH3 domain. 2 stretches are compositionally biased toward polar residues: residues 879–891 (TSVP…KNPL) and 992–1007 (SSAK…NKSP). A compositionally biased stretch (pro residues) spans 1033–1042 (VPPPPPPPPG). Residues 1043 to 1056 (GNNNNESDVPSSSG) are compositionally biased toward low complexity. The segment covering 1057–1097 (GPPPPPPPPPPPGKSSGGGPPPPPPPPPKGGKGGPPPPPPI) has biased composition (pro residues). One can recognise an FH1 domain in the interval 1072–1098 (SGGGPPPPPPPPPKGGKGGPPPPPPIG). The FH2 domain occupies 1106–1495 (KVKEEQPSVP…KSKKYQEQQN (390 aa)). Residues 1492-1502 (EQQNKPTQNND) are compositionally biased toward polar residues. Residues 1507–1529 (SKLSNLPSSSSINDESSSSASLS) show a composition bias toward low complexity. The DAD domain occupies 1563 to 1593 (EQEPVVEPIQITPKVGSAASAEPSPSIKSRD). Residues 1665–1679 (SSSSSSSSSSSSSSS) are compositionally biased toward low complexity. Over residues 1687–1717 (HNTESEIKKEFISNSSMDKDKEKIKEKEKGT) the composition is skewed to basic and acidic residues. The segment covering 1732 to 1745 (KSTTTSPSSSSSKK) has biased composition (low complexity). A compositionally biased stretch (polar residues) spans 1746 to 1757 (QIPSLSECLQES). Low complexity-rich tracts occupy residues 1763–1775 (RSSS…KVNS) and 1841–1853 (PTTT…TTQT). Residues 2067-2118 (IDDNQQKQQKQQQQQQQQQQQQQQLPQPQQQQQQQQQQQQQQQQQQQQQQQQ) adopt a coiled-coil conformation. Positions 2121 to 2154 (QQSTTTTTISTHHPQLKQVQPQSPSSLSQQPTQQ) are enriched in low complexity. 3 disordered regions span residues 2121–2369 (QQST…PKTV), 2381–2473 (SHKK…SYSS), and 2485–2510 (SPSS…LKTP). A compositionally biased stretch (polar residues) spans 2160–2179 (QPSSPLQSHYKPQQKPQTTY). 2 stretches are compositionally biased toward low complexity: residues 2188–2206 (ANPF…SNAS) and 2237–2256 (SSAS…TPLS). The segment covering 2274–2287 (TPPSSSISNSTATT) has biased composition (polar residues). Residues 2302-2315 (SPSSSSLEQSSNAS) show a composition bias toward low complexity. Residues 2332–2342 (FKKHKKSHSKS) are compositionally biased toward basic residues. Low complexity-rich tracts occupy residues 2388–2439 (VDQS…SSSS), 2459–2473 (NISS…SYSS), and 2485–2497 (SPSS…KPSP). Residues 2499–2508 (AVSSTSSTLK) are compositionally biased toward polar residues.

Belongs to the formin homology family. Diaphanous subfamily. As to quaternary structure, interacts (via GBD/FH3 domain) with activated Rho-GTPases.

In terms of biological role, formins play an important role in the nucleation of actin and the formation of linear actin filaments. The protein is Formin-J (forJ) of Dictyostelium discoideum (Social amoeba).